The following is a 239-amino-acid chain: Ubiquinone biosynthesis O-methyltransferase (239 aa).

S-adenosyl-L-methionine-binding residues include Arg45, Gly64, Asp85, and Met129.

This sequence belongs to the methyltransferase superfamily. UbiG/COQ3 family.

The enzyme catalyses a 3-demethylubiquinol + S-adenosyl-L-methionine = a ubiquinol + S-adenosyl-L-homocysteine + H(+). The catalysed reaction is a 3-(all-trans-polyprenyl)benzene-1,2-diol + S-adenosyl-L-methionine = a 2-methoxy-6-(all-trans-polyprenyl)phenol + S-adenosyl-L-homocysteine + H(+). It functions in the pathway cofactor biosynthesis; ubiquinone biosynthesis. Its function is as follows. O-methyltransferase that catalyzes the 2 O-methylation steps in the ubiquinone biosynthetic pathway. The sequence is that of Ubiquinone biosynthesis O-methyltransferase from Nitrosospira multiformis (strain ATCC 25196 / NCIMB 11849 / C 71).